The chain runs to 317 residues: Adenine deaminase (317 aa).

The Zn(2+) site is built by H14, H16, and H194. E197 (proton donor) is an active-site residue. D275 is a Zn(2+) binding site. D276 is a binding site for substrate.

The protein belongs to the metallo-dependent hydrolases superfamily. Adenosine and AMP deaminases family. Adenine deaminase type 2 subfamily. Zn(2+) serves as cofactor.

The enzyme catalyses adenine + H2O + H(+) = hypoxanthine + NH4(+). Functionally, catalyzes the hydrolytic deamination of adenine to hypoxanthine. Plays an important role in the purine salvage pathway and in nitrogen catabolism. This chain is Adenine deaminase, found in Pseudomonas savastanoi pv. phaseolicola (strain 1448A / Race 6) (Pseudomonas syringae pv. phaseolicola (strain 1448A / Race 6)).